The following is a 156-amino-acid chain: Small ribosomal subunit protein uS7 (156 aa).

The protein belongs to the universal ribosomal protein uS7 family. In terms of assembly, part of the 30S ribosomal subunit. Contacts proteins S9 and S11.

One of the primary rRNA binding proteins, it binds directly to 16S rRNA where it nucleates assembly of the head domain of the 30S subunit. Is located at the subunit interface close to the decoding center, probably blocks exit of the E-site tRNA. The sequence is that of Small ribosomal subunit protein uS7 from Salinispora arenicola (strain CNS-205).